Consider the following 441-residue polypeptide: Probable dihydroorotase-like protein (441 aa).

The interval 121–140 is disordered; that stretch reads VNAHHQPPGDPQAENRPDSA.

Belongs to the metallo-dependent hydrolases superfamily. DHOase family. PyrC' subfamily.

Non-functional DHOase. The protein is Probable dihydroorotase-like protein (pyrC') of Synechocystis sp. (strain ATCC 27184 / PCC 6803 / Kazusa).